Consider the following 161-residue polypeptide: Nucleotide-binding protein Bamb_2603 (161 aa).

The protein belongs to the YajQ family.

Nucleotide-binding protein. This is Nucleotide-binding protein Bamb_2603 from Burkholderia ambifaria (strain ATCC BAA-244 / DSM 16087 / CCUG 44356 / LMG 19182 / AMMD) (Burkholderia cepacia (strain AMMD)).